The chain runs to 485 residues: Glutamate--tRNA ligase (485 aa).

The 'HIGH' region signature appears at 11–21 (PSPTGHLHIGN). The short motif at 252–256 (KLSKR) is the 'KMSKS' region element. Lys255 is an ATP binding site.

It belongs to the class-I aminoacyl-tRNA synthetase family. Glutamate--tRNA ligase type 1 subfamily. As to quaternary structure, monomer.

Its subcellular location is the cytoplasm. It carries out the reaction tRNA(Glu) + L-glutamate + ATP = L-glutamyl-tRNA(Glu) + AMP + diphosphate. Catalyzes the attachment of glutamate to tRNA(Glu) in a two-step reaction: glutamate is first activated by ATP to form Glu-AMP and then transferred to the acceptor end of tRNA(Glu). The chain is Glutamate--tRNA ligase from Bacillus cereus (strain ATCC 14579 / DSM 31 / CCUG 7414 / JCM 2152 / NBRC 15305 / NCIMB 9373 / NCTC 2599 / NRRL B-3711).